We begin with the raw amino-acid sequence, 351 residues long: Dihydroorotate dehydrogenase (quinone) (351 aa).

FMN-binding positions include 61 to 65 (AGLDK) and threonine 85. Position 65 (lysine 65) interacts with substrate. Residue 110–114 (NRMGF) coordinates substrate. 2 residues coordinate FMN: asparagine 139 and asparagine 172. A substrate-binding site is contributed by asparagine 172. Serine 175 acts as the Nucleophile in catalysis. Asparagine 177 is a substrate binding site. Positions 217 and 245 each coordinate FMN. 246-247 (NT) is a binding site for substrate. FMN is bound by residues glycine 268, glycine 297, and 318-319 (YS).

This sequence belongs to the dihydroorotate dehydrogenase family. Type 2 subfamily. Monomer. It depends on FMN as a cofactor.

It is found in the cell membrane. It catalyses the reaction (S)-dihydroorotate + a quinone = orotate + a quinol. It functions in the pathway pyrimidine metabolism; UMP biosynthesis via de novo pathway; orotate from (S)-dihydroorotate (quinone route): step 1/1. Functionally, catalyzes the conversion of dihydroorotate to orotate with quinone as electron acceptor. This is Dihydroorotate dehydrogenase (quinone) from Stenotrophomonas maltophilia (strain R551-3).